The following is an 87-amino-acid chain: U24 protein (87 aa).

The residue at position 6 (threonine 6) is a Phosphothreonine. The PPXY motif signature appears at 8 to 11 (PPSY). The helical transmembrane segment at 59 to 79 (FLVLTGLAIAMILFIVFVLYV) threads the bilayer.

As to quaternary structure, interacts with host ITCH; this interaction probably mediates ITCH degradation. Interacts probably with NEDD4.

The protein resides in the membrane. In terms of biological role, down-regulates the TCR/CD3E complex and the transferrin receptor TFRC in host T-cells by blocking them from recycling back to the cell surface. The sequence is that of U24 protein (U24) from Homo sapiens (Human).